We begin with the raw amino-acid sequence, 407 residues long: Imidazolonepropionase (407 aa).

The Fe(3+) site is built by H74 and H76. Residues H74 and H76 each contribute to the Zn(2+) site. 4-imidazolone-5-propanoate contacts are provided by R83, Y146, and H179. Residue Y146 coordinates N-formimidoyl-L-glutamate. Residue H244 coordinates Fe(3+). Residue H244 coordinates Zn(2+). Residue Q247 coordinates 4-imidazolone-5-propanoate. D319 contributes to the Fe(3+) binding site. Position 319 (D319) interacts with Zn(2+). N-formimidoyl-L-glutamate contacts are provided by N321 and G323. T324 contacts 4-imidazolone-5-propanoate.

This sequence belongs to the metallo-dependent hydrolases superfamily. HutI family. Zn(2+) is required as a cofactor. It depends on Fe(3+) as a cofactor.

The protein localises to the cytoplasm. The enzyme catalyses 4-imidazolone-5-propanoate + H2O = N-formimidoyl-L-glutamate. The protein operates within amino-acid degradation; L-histidine degradation into L-glutamate; N-formimidoyl-L-glutamate from L-histidine: step 3/3. Functionally, catalyzes the hydrolytic cleavage of the carbon-nitrogen bond in imidazolone-5-propanoate to yield N-formimidoyl-L-glutamate. It is the third step in the universal histidine degradation pathway. The sequence is that of Imidazolonepropionase from Salmonella schwarzengrund (strain CVM19633).